Consider the following 231-residue polypeptide: ATP phosphoribosyltransferase (231 aa).

This sequence belongs to the ATP phosphoribosyltransferase family. Short subfamily. As to quaternary structure, heteromultimer composed of HisG and HisZ subunits.

The protein localises to the cytoplasm. The enzyme catalyses 1-(5-phospho-beta-D-ribosyl)-ATP + diphosphate = 5-phospho-alpha-D-ribose 1-diphosphate + ATP. The protein operates within amino-acid biosynthesis; L-histidine biosynthesis; L-histidine from 5-phospho-alpha-D-ribose 1-diphosphate: step 1/9. Functionally, catalyzes the condensation of ATP and 5-phosphoribose 1-diphosphate to form N'-(5'-phosphoribosyl)-ATP (PR-ATP). Has a crucial role in the pathway because the rate of histidine biosynthesis seems to be controlled primarily by regulation of HisG enzymatic activity. This chain is ATP phosphoribosyltransferase (hisG), found in Rhizobium meliloti (strain 1021) (Ensifer meliloti).